We begin with the raw amino-acid sequence, 661 residues long: Potassium voltage-gated channel subfamily KQT member 1 (661 aa).

2 disordered regions span residues Met-1–Gly-29 and Glu-42–Pro-88. The Cytoplasmic segment spans residues Met-1 to Trp-119. Ser-27 carries the phosphoserine; by PKA modification. The segment covering Val-54–Ser-85 has biased composition (pro residues). A helical transmembrane segment spans residues Lys-120–Leu-141. Residues Ser-142–Thr-152 lie on the Extracellular side of the membrane. A helical transmembrane segment spans residues Gly-153–Trp-175. At Ser-176–Arg-191 the chain is on the cytoplasmic side. A helical membrane pass occupies residues Phe-192 to Lys-217. Residues Gly-218–Ala-225 are Extracellular-facing. Residues Ile-226–Asp-241 form a helical; Voltage-sensor membrane-spanning segment. The tract at residues Met-237–Gly-245 is interaction with KCNE3. Residues Arg-242–Gln-259 lie on the Cytoplasmic side of the membrane. Gln-243 is a binding site for a 1,2-diacyl-sn-glycero-3-phospho-(1D-myo-inositol-4,5-bisphosphate). Residues Glu-260–Ala-282 form a helical membrane-spanning segment. Topologically, residues Glu-283 to Tyr-298 are extracellular. Asn-288 carries an N-linked (GlcNAc...) asparagine glycan. The pore-forming intramembrane region spans Ala-299–Pro-319. Over Gln-320–Thr-321 the chain is Extracellular. Residues Trp-322 to Gly-347 traverse the membrane as a helical segment. The Cytoplasmic portion of the chain corresponds to Ser-348–Ser-661. Residues Ala-369 to Tyr-381 form an interaction with CALM region. Phosphoserine occurs at positions 406 and 408. The tract at residues Lys-514 to Phe-528 is interaction with CALM; calcium-dependent. An interaction with KCNE1 C-terminus region spans residues Pro-534 to Leu-571. The stretch at Ser-584–Gln-620 forms a coiled coil. Residues Ile-587 to Leu-615 form an interaction with AKAP9 region. The C-terminal assembly domain (tetramerization) stretch occupies residues Gly-588–His-619. Positions His-624 to Ser-661 are disordered.

The protein belongs to the potassium channel family. KQT (TC 1.A.1.15) subfamily. Kv7.1/KCNQ1 sub-subfamily. Tetramer. Heterotetramer with KCNE1; targets to the membrane raft. Interacts (via C-terminus) with CALM; forms a heterooctameric structure (with 4:4 KCNQ1:CALM stoichiometry) in a calcium-independent manner. Interacts with AKAP9; targets protein kinase A (PKA) catalytic and regulatory subunits and protein phosphatase 1 (PP1) to the KCNQ1-KCNE1 complex, allowing PKA-mediated phosphorylation and increase of delayed rectifier potassium channel activity. Interacts with KCNE2; form a heterooligomer complex that targets to the membrane raft and leading to currents with an apparently instantaneous activation, a rapid deactivation process and a linear current-voltage relationship and decreases the amplitude of the outward current. Interacts with AP2M1; mediates estrogen-induced internalization via clathrin-coated vesicles. Interacts with NEDD4L; promotes internalization and decreases I(Ks) currents. Interacts with USP2; counteracts the NEDD4L-specific down-regulation of I(Ks) and restore plasma membrane localization. Heterotetramer with KCNQ5; has a voltage-gated potassium channel activity. Interacts with KCNE3; four KCNE3 molecules are bound to one KCNQ1 tetramer (4:4 KCNQ1:KCNE3 stoichiometry); alters membrane raft localization; affects KCNQ1 structure and gating properties. Interacts with KCNE4; impairs KCNQ1 localization in lipid rafts and inhibits voltage-gated potassium channel activity. Interacts with KCNE5; impairs KCNQ1 localization in lipid rafts and only conducts current upon strong and continued depolarization. Interacts with SLC5A3; forms coregulatory channel-transporter complexes that modulate Na(+)-coupled myo-inositol influx through the transporter. Phosphorylation at Ser-27 by PKA; increases delayed rectifier potassium channel activity of the KCNQ1-KCNE1 complex through a macromolecular complex that includes PKA, PP1, and the targeting protein AKAP9. Post-translationally, ubiquitinated by NEDD4L; promotes internalization. The ubiquitinylated form is internalized through a clathrin-mediated endocytosis by interacting with AP2M1 and is recycled back to the cell membrane via RAB4A and RAB11A. In terms of processing, deubiquitinated by USP2; counteracts the NEDD4L-specific down-regulation of I(Ks) and restores the membrane localization.

The protein localises to the cell membrane. It localises to the cytoplasmic vesicle membrane. The protein resides in the early endosome. It is found in the membrane raft. Its subcellular location is the endoplasmic reticulum. The protein localises to the basolateral cell membrane. It localises to the apical cell membrane. The catalysed reaction is K(+)(in) = K(+)(out). With respect to regulation, PIP2 molecule is essential to activate KCNQ channels by inducing the coupling of the voltage-sensing domain (VSD) and the pore-forming domain (PD). Upon channel activation, PIP2 disrupts the VSD-calmodulin/CALM interactions, causing the release of CALM from the VSD which triggers the opening of the gate. Calcium potentiates KCNQ1 channel current through calcium-bound CALM. Calcium-bound CALM competes with PIP2 to stabilize the channel open state. Its function is as follows. Pore-forming subunit of the voltage-gated potassium (Kv) channel involved in the regulation of cardiomyocyte excitability and important in normal development and functions of myocardium, inner ear, stomach and colon. Associates with KCNE beta subunits that modulates current kinetics. Induces a voltage-dependent by rapidly activating and slowly deactivating potassium-selective outward current. Also promotes a delayed voltage activated potassium current showing outward rectification characteristic. During beta-adrenergic receptor stimulation participates in cardiac repolarization by associating with KCNE1 to form the I(Ks) cardiac potassium current that increases the amplitude and slows down the activation kinetics of outward potassium current I(Ks). Muscarinic agonist oxotremorine-M strongly suppresses KCNQ1/KCNE1 current. When associated with KCNE3, forms the potassium channel that is important for cyclic AMP-stimulated intestinal secretion of chloride ions. This interaction with KCNE3 is reduced by 17beta-estradiol, resulting in the reduction of currents. During conditions of increased substrate load, maintains the driving force for proximal tubular and intestinal sodium ions absorption, gastric acid secretion, and cAMP-induced jejunal chloride ions secretion. Allows the provision of potassium ions to the luminal membrane of the secretory canaliculus in the resting state as well as during stimulated acid secretion. When associated with KCNE2, forms a heterooligomer complex leading to currents with an apparently instantaneous activation, a rapid deactivation process and a linear current-voltage relationship and decreases the amplitude of the outward current. When associated with KCNE4, inhibits voltage-gated potassium channel activity. When associated with KCNE5, this complex only conducts current upon strong and continued depolarization. Also forms a heterotetramer with KCNQ5 that has a voltage-gated potassium channel activity. Binds with phosphatidylinositol 4,5-bisphosphate. KCNQ1-KCNE2 channel associates with Na(+)-coupled myo-inositol symporter in the apical membrane of choroid plexus epithelium and regulates the myo-inositol gradient between blood and cerebrospinal fluid with an impact on neuron excitability. The polypeptide is Potassium voltage-gated channel subfamily KQT member 1 (Oryctolagus cuniculus (Rabbit)).